We begin with the raw amino-acid sequence, 630 residues long: Putative lipase atg15 (630 aa).

The Cytoplasmic portion of the chain corresponds to 1–20 (MKSSQRRIKRHAMRDMSIST). A helical; Signal-anchor for type II membrane protein membrane pass occupies residues 21-40 (LLLSVVLLPSVVSANDHVYF). Over 41 to 630 (NPPSPGSPFL…WGSDIEHYEI (590 aa)) the chain is Lumenal. N-linked (GlcNAc...) asparagine glycans are attached at residues Asn200, Asn222, Asn280, and Asn304. The active-site Charge relay system is the Ser320. Residue Asn466 is glycosylated (N-linked (GlcNAc...) asparagine). Residues 577–589 (SVTAPPFSTSTSS) are compositionally biased toward polar residues. The disordered stretch occupies residues 577 to 599 (SVTAPPFSTSTSSDHVRADHSIG).

The protein belongs to the AB hydrolase superfamily. Lipase family. Binds to both phosphatidylinositol (PI) and phosphatidylinositol 3,5-bisphosphate (PIP2).

The protein localises to the endosome. Its subcellular location is the multivesicular body membrane. It localises to the prevacuolar compartment membrane. It carries out the reaction a triacylglycerol + H2O = a diacylglycerol + a fatty acid + H(+). In terms of biological role, lipase which is essential for lysis of subvacuolar cytoplasm to vacuole targeted bodies and intravacuolar autophagic bodies. Involved in the lysis of intravacuolar multivesicular body (MVB) vesicles. The intravacuolar membrane disintegration by atg15 is critical to life span extension. This chain is Putative lipase atg15 (atg15), found in Aspergillus clavatus (strain ATCC 1007 / CBS 513.65 / DSM 816 / NCTC 3887 / NRRL 1 / QM 1276 / 107).